Reading from the N-terminus, the 159-residue chain is NADH-quinone oxidoreductase subunit I (159 aa).

4Fe-4S ferredoxin-type domains lie at 51 to 80 (RRYE…IEAD) and 90 to 119 (TRYD…EGPN). Residues cysteine 60, cysteine 63, cysteine 66, cysteine 70, cysteine 99, cysteine 102, cysteine 105, and cysteine 109 each contribute to the [4Fe-4S] cluster site.

It belongs to the complex I 23 kDa subunit family. As to quaternary structure, NDH-1 is composed of 14 different subunits. Subunits NuoA, H, J, K, L, M, N constitute the membrane sector of the complex. The cofactor is [4Fe-4S] cluster.

The protein resides in the cell inner membrane. The enzyme catalyses a quinone + NADH + 5 H(+)(in) = a quinol + NAD(+) + 4 H(+)(out). Functionally, NDH-1 shuttles electrons from NADH, via FMN and iron-sulfur (Fe-S) centers, to quinones in the respiratory chain. The immediate electron acceptor for the enzyme in this species is believed to be ubiquinone. Couples the redox reaction to proton translocation (for every two electrons transferred, four hydrogen ions are translocated across the cytoplasmic membrane), and thus conserves the redox energy in a proton gradient. In Rickettsia bellii (strain OSU 85-389), this protein is NADH-quinone oxidoreductase subunit I.